The following is a 464-amino-acid chain: Glutamate--tRNA ligase 1 (464 aa).

Residues P8–G18 carry the 'HIGH' region motif. Positions P231–R235 match the 'KMSKS' region motif. ATP is bound at residue K234.

Belongs to the class-I aminoacyl-tRNA synthetase family. Glutamate--tRNA ligase type 1 subfamily. As to quaternary structure, monomer.

The protein localises to the cytoplasm. The catalysed reaction is tRNA(Glu) + L-glutamate + ATP = L-glutamyl-tRNA(Glu) + AMP + diphosphate. In terms of biological role, catalyzes the attachment of glutamate to tRNA(Glu) in a two-step reaction: glutamate is first activated by ATP to form Glu-AMP and then transferred to the acceptor end of tRNA(Glu). This Thermotoga sp. (strain RQ2) protein is Glutamate--tRNA ligase 1.